The following is a 731-amino-acid chain: DNA ligase (731 aa).

Residues 59 to 63 (DSEYD), 108 to 109 (SL), and Glu142 contribute to the NAD(+) site. Lys144 functions as the N6-AMP-lysine intermediate in the catalytic mechanism. NAD(+) is bound by residues Arg165, Glu202, Lys318, and Lys342. Residues Cys434, Cys437, Cys452, and Cys458 each contribute to the Zn(2+) site. The BRCT domain maps to 645–731 (LASSPLSGKI…ENDGQDSIKI (87 aa)).

It belongs to the NAD-dependent DNA ligase family. LigA subfamily. Requires Mg(2+) as cofactor. It depends on Mn(2+) as a cofactor.

The catalysed reaction is NAD(+) + (deoxyribonucleotide)n-3'-hydroxyl + 5'-phospho-(deoxyribonucleotide)m = (deoxyribonucleotide)n+m + AMP + beta-nicotinamide D-nucleotide.. Its function is as follows. DNA ligase that catalyzes the formation of phosphodiester linkages between 5'-phosphoryl and 3'-hydroxyl groups in double-stranded DNA using NAD as a coenzyme and as the energy source for the reaction. It is essential for DNA replication and repair of damaged DNA. This is DNA ligase from Zymomonas mobilis subsp. mobilis (strain ATCC 31821 / ZM4 / CP4).